The following is a 117-amino-acid chain: Large ribosomal subunit protein bL17 (117 aa).

Belongs to the bacterial ribosomal protein bL17 family. Part of the 50S ribosomal subunit. Contacts protein L32.

The protein is Large ribosomal subunit protein bL17 of Campylobacter lari (strain RM2100 / D67 / ATCC BAA-1060).